Consider the following 111-residue polypeptide: Ribonuclease P protein component (111 aa).

It belongs to the RnpA family. Consists of a catalytic RNA component (M1 or rnpB) and a protein subunit.

The catalysed reaction is Endonucleolytic cleavage of RNA, removing 5'-extranucleotides from tRNA precursor.. Functionally, RNaseP catalyzes the removal of the 5'-leader sequence from pre-tRNA to produce the mature 5'-terminus. It can also cleave other RNA substrates such as 4.5S RNA. The protein component plays an auxiliary but essential role in vivo by binding to the 5'-leader sequence and broadening the substrate specificity of the ribozyme. This chain is Ribonuclease P protein component, found in Streptococcus thermophilus (strain CNRZ 1066).